Here is a 779-residue protein sequence, read N- to C-terminus: Phosphoribosylformylglycinamidine synthase subunit PurL (779 aa).

His52 is a catalytic residue. 2 residues coordinate ATP: Tyr55 and Lys94. Position 96 (Glu96) interacts with Mg(2+). Substrate is bound by residues 97–100 and Arg119; that span reads SHNH. Catalysis depends on His98, which acts as the Proton acceptor. Asp120 lines the Mg(2+) pocket. Substrate is bound at residue Gln243. Asp271 provides a ligand contact to Mg(2+). Position 315–317 (315–317) interacts with substrate; it reads ESQ. Asn523 and Gly560 together coordinate ATP. Asn561 provides a ligand contact to Mg(2+). Ser563 contributes to the substrate binding site.

Belongs to the FGAMS family. As to quaternary structure, monomer. Part of the FGAM synthase complex composed of 1 PurL, 1 PurQ and 2 PurS subunits.

It localises to the cytoplasm. The enzyme catalyses N(2)-formyl-N(1)-(5-phospho-beta-D-ribosyl)glycinamide + L-glutamine + ATP + H2O = 2-formamido-N(1)-(5-O-phospho-beta-D-ribosyl)acetamidine + L-glutamate + ADP + phosphate + H(+). Its pathway is purine metabolism; IMP biosynthesis via de novo pathway; 5-amino-1-(5-phospho-D-ribosyl)imidazole from N(2)-formyl-N(1)-(5-phospho-D-ribosyl)glycinamide: step 1/2. Its function is as follows. Part of the phosphoribosylformylglycinamidine synthase complex involved in the purines biosynthetic pathway. Catalyzes the ATP-dependent conversion of formylglycinamide ribonucleotide (FGAR) and glutamine to yield formylglycinamidine ribonucleotide (FGAM) and glutamate. The FGAM synthase complex is composed of three subunits. PurQ produces an ammonia molecule by converting glutamine to glutamate. PurL transfers the ammonia molecule to FGAR to form FGAM in an ATP-dependent manner. PurS interacts with PurQ and PurL and is thought to assist in the transfer of the ammonia molecule from PurQ to PurL. This chain is Phosphoribosylformylglycinamidine synthase subunit PurL, found in Prochlorococcus marinus (strain MIT 9312).